The chain runs to 327 residues: Homeotic protein distal-less (327 aa).

The segment at residues 124 to 183 (MRKPRTIYSSLQLQQLNRRFQRTQYLALPERAELAASLGLTQTQVKIWFQNRRSKYKKMM) is a DNA-binding region (homeobox). The interval 181 to 303 (KMMKAAQGPG…THHHNPPPQM (123 aa)) is disordered. A compositionally biased stretch (low complexity) spans 231-249 (LPPGHSPTPSSTPVSELSP). The span at 266–275 (QKPHWIDHKP) shows a compositional bias: basic and acidic residues. A compositionally biased stretch (pro residues) spans 276 to 286 (PPQMTPQPPHP).

In terms of tissue distribution, expressed in the embryo in limb primordia of the head and thoracic segments. Expressed in regions of the larval leg, wing, antennal and haltere disks that form the distal-most regions of the mature structures (in the leg this corresponds to the tarsus and the distal tibia). Found in the optic center of the developing larval brain.

It is found in the nucleus. In terms of biological role, transcription factor that plays a role in larval and adult appendage development. Specifies the identity of ventral appendages (including legs and antennae) and suppresses dorsal appendage development. Involved in patterning the distal-proximal limb axis. May control the adhesive properties of cells during limb morphogenesis. Also has a secondary role in the normal patterning of the wing margin. This is Homeotic protein distal-less (Dll) from Drosophila melanogaster (Fruit fly).